An 81-amino-acid polypeptide reads, in one-letter code: ATP synthase subunit c, chloroplastic (81 aa).

2 helical membrane passes run 3-23 and 57-77; these read PIIC…GAIG and LAFM…IIFA.

The protein belongs to the ATPase C chain family. F-type ATPases have 2 components, F(1) - the catalytic core - and F(0) - the membrane proton channel. F(1) has five subunits: alpha(3), beta(3), gamma(1), delta(1), epsilon(1). F(0) has four main subunits: a(1), b(1), b'(1) and c(10-14). The alpha and beta chains form an alternating ring which encloses part of the gamma chain. F(1) is attached to F(0) by a central stalk formed by the gamma and epsilon chains, while a peripheral stalk is formed by the delta, b and b' chains.

The protein resides in the plastid. Its subcellular location is the chloroplast thylakoid membrane. Functionally, f(1)F(0) ATP synthase produces ATP from ADP in the presence of a proton or sodium gradient. F-type ATPases consist of two structural domains, F(1) containing the extramembraneous catalytic core and F(0) containing the membrane proton channel, linked together by a central stalk and a peripheral stalk. During catalysis, ATP synthesis in the catalytic domain of F(1) is coupled via a rotary mechanism of the central stalk subunits to proton translocation. Its function is as follows. Key component of the F(0) channel; it plays a direct role in translocation across the membrane. A homomeric c-ring of between 10-14 subunits forms the central stalk rotor element with the F(1) delta and epsilon subunits. This chain is ATP synthase subunit c, chloroplastic, found in Euglena gracilis.